A 101-amino-acid chain; its full sequence is Small ribosomal subunit protein uS14A (101 aa).

The disordered stretch occupies residues 29–60 (EIIRSPRSTPEQRTAAQNELAHQPRDASAVRV). The segment covering 34-45 (PRSTPEQRTAAQ) has biased composition (polar residues).

Belongs to the universal ribosomal protein uS14 family. In terms of assembly, part of the 30S ribosomal subunit. Contacts proteins S3 and S10.

Binds 16S rRNA, required for the assembly of 30S particles and may also be responsible for determining the conformation of the 16S rRNA at the A site. This chain is Small ribosomal subunit protein uS14A, found in Mycolicibacterium paratuberculosis (strain ATCC BAA-968 / K-10) (Mycobacterium paratuberculosis).